A 117-amino-acid polypeptide reads, in one-letter code: Huntingtin-interacting protein M (117 aa).

Disordered stretches follow at residues 1–30 and 71–117; these read MSEK…VPRS and EASN…RKND. The segment covering 72 to 81 has biased composition (polar residues); the sequence is ASNNGSMRNT. The segment covering 82-117 has biased composition (basic and acidic residues); sequence SQDREREVDNNREPHSAESDVTRFLFDEMPKSRKND.

May interact with the N-terminus of HD.

The sequence is that of Huntingtin-interacting protein M from Homo sapiens (Human).